An 88-amino-acid polypeptide reads, in one-letter code: UPF0367 protein Tery_1229 (88 aa).

The protein belongs to the UPF0367 family.

In Trichodesmium erythraeum (strain IMS101), this protein is UPF0367 protein Tery_1229.